The primary structure comprises 477 residues: MQVLHVCSEMFPLLKTGGLADVIGALPAAQIADGVDARVLLPAFPDIRRGVTDAQVVSRRDTFAGHITLLFGHYNGVGIYLIDAPHLYDRPGSPYHDTNLFAYTDNVLRFALLGWVGAEMASGLDPFWRPDVVHAHDWHAGLAPAYLAARGRPAKSVFTVHNLAYQGMFYAHHMNDIQLPWSFFNIHGLEFNGQISFLKAGLYYADHITAVSPTYAREITEPQFAYGMEGLLQQRHREGRLSGVLNGVDEKIWSPETDLLLASRYTRDTLEDKAENKRQLQIAMGLKVDDKVPLFAVVSRLTSQKGLDLVLEALPGLLEQGGQLALLGAGDPVLQEGFLAAAAEYPGQVGVQIGYHEAFSHRIMGGADVILVPSRFEPCGLTQLYGLKYGTLPLVRRTGGLADTVSDCSLENLADGVASGFVFEDSNAWSLLRAIRRAFVLWSRPSLWRFVQRQAMAMDFSWQVAAKSYRELYYRLK.

Position 15 (lysine 15) interacts with ADP-alpha-D-glucose.

The protein belongs to the glycosyltransferase 1 family. Bacterial/plant glycogen synthase subfamily.

It carries out the reaction [(1-&gt;4)-alpha-D-glucosyl](n) + ADP-alpha-D-glucose = [(1-&gt;4)-alpha-D-glucosyl](n+1) + ADP + H(+). It participates in glycan biosynthesis; glycogen biosynthesis. Functionally, synthesizes alpha-1,4-glucan chains using ADP-glucose. This is Glycogen synthase from Escherichia coli O139:H28 (strain E24377A / ETEC).